Consider the following 665-residue polypeptide: MEPRVVKPPGQDLVVERLKSRYGLGGSCPDEYDFSNFDQSKCKRRTLTSPGDLDIYSGDKVGSSLKYSDESKHCRTPLCSLFKRVNVNCLDDELDSFHDLKKRETEEELIENDYRVSTSKITKQSFKDIEKVALPTNTTSSRPRTECCSDAGDSPLKLVSYPKSRASDKRSLLPRQISQIYDELFQIHLKLQCETAAQQKFAEELQKRERFLLEREQLLFRHEDALSKIKGVEEEVLTRFQIMKEQHDAEVEHLTEVLKEKNKETKRLRSSFDALKELNDTLKKQLNEASEENRKMDIQAKRVQARLDNLQRKYEFMTIQRLKGSSHAVHEMKSLKQEKAPVSKTYKVPLNGQVYELLTVFMDWISDHHLSKVKHEESGMDGKKPQLKFASQRNDIQEKCVKLLPLMTEQLQWMPFVNTKLHEPFVKFIYWSLRQLDAGAQHSTMTSTLRRLGEDIFKGVVTKGIQDSSPQHSVENKPKTAAFFKSSNLPLRFLSTLIVLKTVTQADYLAQAFNSLCLDLKTEEGKTLFLEYQAVPVILSHLRISSKGLLSNVIDSLLQMTVESKSLQPFLEACSNSSFFRTCSVLLRAPKLDLQILEKLSTILQKLSKIKSNKKLFELFTIHLMLQEIQRTTNPEHAFLCINLNSTLFNLGLTKCNSLVSSASH.

Thr48 is subject to Phosphothreonine. Phosphoserine is present on Ser49. The stretch at 198–323 forms a coiled coil; the sequence is QQKFAEELQK…YEFMTIQRLK (126 aa). Ser469 carries the post-translational modification Phosphoserine.

This chain is Coiled-coil domain-containing protein 138 (CCDC138), found in Macaca fascicularis (Crab-eating macaque).